The chain runs to 126 residues: Ribonuclease VapC23 (126 aa).

Residues 2-118 form the PINc domain; the sequence is IFVDTNVFMY…GVTRIKTFDH (117 aa). Mg(2+) is bound by residues Asp5 and Asp98.

The protein belongs to the PINc/VapC protein family. Mg(2+) is required as a cofactor.

Functionally, toxic component of a type II toxin-antitoxin (TA) system. An RNase. The cognate antitoxin is VapB23. This is Ribonuclease VapC23 from Mycobacterium tuberculosis (strain CDC 1551 / Oshkosh).